A 309-amino-acid chain; its full sequence is General transcription factor IIH subunit 3 (309 aa).

The C4-type zinc-finger motif lies at Cys269–Cys286.

It belongs to the TFB4 family. In terms of assembly, part of a TFIID-containing RNA polymerase II pre-initiation complex that is composed of TBP and at least GTF2A1, GTF2A2, GTF2E1, GTF2E2, GTF2F1, GTF2H2, GTF2H3, GTF2H4, GTF2H5, GTF2B, TCEA1, ERCC2, ERCC3, TAF1, TAF2, TAF3, TAF4, TAF5, TAF6, TAF7, TAF8, TAF9, TAF10, TAF11, TAF12 and TAF13. Component of the 7-subunit TFIIH core complex composed of XPB/ERCC3, XPD/ERCC2, GTF2H1, GTF2H2, GTF2H3, GTF2H4 and GTF2H5, which is active in NER. The core complex associates with the 3-subunit CDK-activating kinase (CAK) module composed of CCNH/cyclin H, CDK7 and MNAT1 to form the 10-subunit holoenzyme (holo-TFIIH) active in transcription. Interacts with RARA; the interaction requires prior phosphorylation of RARA on 'Ser-369' which then enhances interaction of RARA with CDK7.

The protein resides in the nucleus. Functionally, component of the general transcription and DNA repair factor IIH (TFIIH) core complex, which is involved in general and transcription-coupled nucleotide excision repair (NER) of damaged DNA and, when complexed to CAK, in RNA transcription by RNA polymerase II. In NER, TFIIH acts by opening DNA around the lesion to allow the excision of the damaged oligonucleotide and its replacement by a new DNA fragment. In transcription, TFIIH has an essential role in transcription initiation. When the pre-initiation complex (PIC) has been established, TFIIH is required for promoter opening and promoter escape. Phosphorylation of the C-terminal tail (CTD) of the largest subunit of RNA polymerase II by the kinase module CAK controls the initiation of transcription. The sequence is that of General transcription factor IIH subunit 3 (Gtf2h3) from Mus musculus (Mouse).